The chain runs to 337 residues: MANSC domain-containing protein 4 (337 aa).

The first 18 residues, Met1–Gly18, serve as a signal peptide directing secretion. Topologically, residues Leu19–Gly278 are extracellular. An MANSC domain is found at Arg33–Tyr113. N-linked (GlcNAc...) asparagine glycans are attached at residues Asn114, Asn227, and Asn251. Composition is skewed to polar residues over residues Ser216–Ile230 and Thr239–Thr260. A disordered region spans residues Ser216 to Asp277. Residues Ala279 to Leu299 form a helical membrane-spanning segment. The Cytoplasmic portion of the chain corresponds to Cys300–Ser337. The disordered stretch occupies residues Arg314–Ser337.

Its subcellular location is the membrane. The polypeptide is MANSC domain-containing protein 4 (Mansc4) (Mus musculus (Mouse)).